The primary structure comprises 216 residues: Ras-related protein YPTC6 (216 aa).

Residue 19–26 (GDSGVGKS) participates in GTP binding. Residues 41–49 (SKSTIGVEF) carry the Effector region motif. Residues 67–71 (DTAGQ) and 125–128 (NKSD) each bind GTP. S-geranylgeranyl cysteine attachment occurs at residues Cys214 and Cys215.

The protein belongs to the small GTPase superfamily. Rab family.

It is found in the cell membrane. The sequence is that of Ras-related protein YPTC6 (YPTC6) from Chlamydomonas reinhardtii (Chlamydomonas smithii).